The chain runs to 1709 residues: Acrosomal protein KIAA1210 (1709 aa).

Disordered regions lie at residues 207–226 (PVRE…GSKA), 239–275 (PERS…SKVP), 451–663 (PNLD…AEKT), 763–973 (PPRS…MAVE), 1211–1382 (LKRG…SVNA), 1408–1516 (TKKF…GRGH), 1539–1571 (ADKQ…QSDY), and 1589–1653 (FKAH…KSVG). Basic residues predominate over residues 257-272 (PQQRSHISRTLPKPRS). The segment covering 473-490 (EEEKSITKPKEINEKKLG) has biased composition (basic and acidic residues). Polar residues-rich tracts occupy residues 494–505 (ADSSSQKQNNKT) and 514–527 (DQAP…SQGY). Over residues 595–608 (EQPTTSQPETTTPQ) the composition is skewed to low complexity. The segment covering 651–663 (PYHEDAASGAEKT) has biased composition (basic and acidic residues). Over residues 777-794 (EEVSSDSENIPEEGDGSE) the composition is skewed to acidic residues. 5 stretches are compositionally biased toward polar residues: residues 886 to 941 (KNQQ…QSDS), 1288 to 1299 (FKEQLSPRQLSQ), 1332 to 1350 (HSSQ…SSKG), 1366 to 1376 (PSSSPFQQQVH), and 1457 to 1469 (DGNN…LSNQ). Positions 1502–1513 (SVPSGPISSSVG) are enriched in low complexity. Basic and acidic residues predominate over residues 1542-1552 (QQSRPKSESMA).

In terms of assembly, interacts with TOP2B.

It localises to the cytoplasmic vesicle. It is found in the secretory vesicle. The protein localises to the acrosome. The chain is Acrosomal protein KIAA1210 from Homo sapiens (Human).